Consider the following 100-residue polypeptide: Large ribosomal subunit protein uL23 (100 aa).

This sequence belongs to the universal ribosomal protein uL23 family. As to quaternary structure, part of the 50S ribosomal subunit. Contacts protein L29, and trigger factor when it is bound to the ribosome.

In terms of biological role, one of the early assembly proteins it binds 23S rRNA. One of the proteins that surrounds the polypeptide exit tunnel on the outside of the ribosome. Forms the main docking site for trigger factor binding to the ribosome. This chain is Large ribosomal subunit protein uL23, found in Thermotoga neapolitana (strain ATCC 49049 / DSM 4359 / NBRC 107923 / NS-E).